The chain runs to 483 residues: Glycogen synthase kinase-3 alpha (483 aa).

Residues 1-15 (MSGGGPSGGGPGGSG) are compositionally biased toward gly residues. The disordered stretch occupies residues 1–96 (MSGGGPSGGG…PPPGVKLGRD (96 aa)). N-acetylserine is present on serine 2. The residue at position 2 (serine 2) is a Phosphoserine. Phosphoserine; by PKB/AKT1 is present on serine 21. The span at 25 to 82 (PGGGGGGGGGGPGGSASGPGGTGGGKASVGAMGGGVGASSSGGGPGGSGGGGSGGPGA) shows a compositional bias: gly residues. A phosphoserine mark is found at serine 72, serine 77, and serine 97. One can recognise a Protein kinase domain in the interval 119 to 403 (YTDIKVIGNG…PLEACAHSFF (285 aa)). ATP-binding positions include 125–133 (IGNGSFGVV) and lysine 148. The Proton acceptor role is filled by aspartate 244. Tyrosine 279 is subject to Phosphotyrosine. Residues 449 to 483 (AGTTTLTPSSQALTETPTSSDWQSTDATPTLTNSS) are disordered.

It belongs to the protein kinase superfamily. CMGC Ser/Thr protein kinase family. GSK-3 subfamily. As to quaternary structure, monomer. Interacts with ARRB2. Interacts with AXIN1 and CTNNB1/beta-catenin. Interacts with CTNND2. Interacts with LMBR1L. Interacts with DDX3X. Interacts with TNFRSF10B. Interacts with RICTOR; the interaction results in phosphorylation of RICTOR at 'Thr-1695' by GSK3A which facilitates FBXW7-mediated ubiquitination and subsequent degradation of RICTOR. (Microbial infection) Interacts with M.tuberculosis PtpA. Post-translationally, phosphorylated by AKT1 at Ser-21: upon insulin-mediated signaling, the activated PKB/AKT1 protein kinase phosphorylates and deactivates GSK3A, resulting in the dephosphorylation and activation of GYS1. Activated by phosphorylation at Tyr-279. (Microbial infection) Dephosphorylated at Tyr-279 by M.tuberculosis PtpA, which leads to prevention of apoptosis during early stages of microbial infection.

It catalyses the reaction L-seryl-[tau protein] + ATP = O-phospho-L-seryl-[tau protein] + ADP + H(+). The catalysed reaction is L-threonyl-[tau protein] + ATP = O-phospho-L-threonyl-[tau protein] + ADP + H(+). The enzyme catalyses L-seryl-[protein] + ATP = O-phospho-L-seryl-[protein] + ADP + H(+). It carries out the reaction L-threonyl-[protein] + ATP = O-phospho-L-threonyl-[protein] + ADP + H(+). Its activity is regulated as follows. Activated by phosphorylation at Tyr-279. In response to insulin, inhibited by phosphorylation at Ser-21 by PKB/AKT1; phosphorylation at this site causes a conformational change, preventing access of substrates to the active site. Inhibited by lithium. Its function is as follows. Constitutively active protein kinase that acts as a negative regulator in the hormonal control of glucose homeostasis, Wnt signaling and regulation of transcription factors and microtubules, by phosphorylating and inactivating glycogen synthase (GYS1 or GYS2), CTNNB1/beta-catenin, APC and AXIN1. Requires primed phosphorylation of the majority of its substrates. Contributes to insulin regulation of glycogen synthesis by phosphorylating and inhibiting GYS1 activity and hence glycogen synthesis. Regulates glycogen metabolism in liver, but not in muscle. May also mediate the development of insulin resistance by regulating activation of transcription factors. In Wnt signaling, regulates the level and transcriptional activity of nuclear CTNNB1/beta-catenin. Facilitates amyloid precursor protein (APP) processing and the generation of APP-derived amyloid plaques found in Alzheimer disease. May be involved in the regulation of replication in pancreatic beta-cells. Is necessary for the establishment of neuronal polarity and axon outgrowth. Through phosphorylation of the anti-apoptotic protein MCL1, may control cell apoptosis in response to growth factors deprivation. Acts as a regulator of autophagy by mediating phosphorylation of KAT5/TIP60 under starvation conditions which activates KAT5/TIP60 acetyltransferase activity and promotes acetylation of key autophagy regulators, such as ULK1 and RUBCNL/Pacer. Negatively regulates extrinsic apoptotic signaling pathway via death domain receptors. Promotes the formation of an anti-apoptotic complex, made of DDX3X, BRIC2 and GSK3B, at death receptors, including TNFRSF10B. The anti-apoptotic function is most effective with weak apoptotic signals and can be overcome by stronger stimulation. Phosphorylates mTORC2 complex component RICTOR at 'Thr-1695' which facilitates FBXW7-mediated ubiquitination and subsequent degradation of RICTOR. This chain is Glycogen synthase kinase-3 alpha (GSK3A), found in Homo sapiens (Human).